Consider the following 184-residue polypeptide: ATP synthase subunit b, chloroplastic (184 aa).

A helical transmembrane segment spans residues 27 to 49 (LATNPINLSVVLGVLIFFGKGVL).

The protein belongs to the ATPase B chain family. F-type ATPases have 2 components, F(1) - the catalytic core - and F(0) - the membrane proton channel. F(1) has five subunits: alpha(3), beta(3), gamma(1), delta(1), epsilon(1). F(0) has four main subunits: a(1), b(1), b'(1) and c(10-14). The alpha and beta chains form an alternating ring which encloses part of the gamma chain. F(1) is attached to F(0) by a central stalk formed by the gamma and epsilon chains, while a peripheral stalk is formed by the delta, b and b' chains.

It is found in the plastid. The protein localises to the chloroplast thylakoid membrane. Its function is as follows. F(1)F(0) ATP synthase produces ATP from ADP in the presence of a proton or sodium gradient. F-type ATPases consist of two structural domains, F(1) containing the extramembraneous catalytic core and F(0) containing the membrane proton channel, linked together by a central stalk and a peripheral stalk. During catalysis, ATP synthesis in the catalytic domain of F(1) is coupled via a rotary mechanism of the central stalk subunits to proton translocation. In terms of biological role, component of the F(0) channel, it forms part of the peripheral stalk, linking F(1) to F(0). The polypeptide is ATP synthase subunit b, chloroplastic (Eucalyptus globulus subsp. globulus (Tasmanian blue gum)).